A 42-amino-acid polypeptide reads, in one-letter code: Thymosin beta-10 (42 aa).

2 stretches are compositionally biased toward basic and acidic residues: residues 1–25 (MADK…ETQE) and 33–42 (ETIEQEKQAK). The interval 1–42 (MADKPDMGEINSFDKAKLKKTETQEKNTLPTKETIEQEKQAK) is disordered. The residue at position 2 (Ala-2) is an N-acetylalanine. Position 4 is an N6-acetyllysine (Lys-4). Ser-12 carries the phosphoserine modification. An N6-acetyllysine modification is found at Lys-15. Phosphothreonine occurs at positions 21, 23, and 34. Residue Lys-39 is modified to N6-acetyllysine.

It belongs to the thymosin beta family.

It is found in the cytoplasm. It localises to the cytoskeleton. Plays an important role in the organization of the cytoskeleton. Binds to and sequesters actin monomers (G actin) and therefore inhibits actin polymerization. This Sus scrofa (Pig) protein is Thymosin beta-10 (TMSB10).